Reading from the N-terminus, the 596-residue chain is MRVSRLMLNTLRDVPAEADIISHQLLVRGGYVKRLTGGIYAYMPLLWKVLKKITSIVEEELSTKGCLQTLLPQLQPSEIWERSGRWKSYTKGEGIMFSLKDRQGKELGLGPTHEEVITQIISQTIHSYKQLPINIFQIQTKFRDEIRPRFGLMRSREFIMKDAYSFHANENDLQSTYSDMRNAYENIFTKCGLDFVCVDADSGAIGGAASQEFMVTAESGEDLILISSDSKYGANQEKAVSIIEEGKLLEPNKPSIIKTPNQKTIDELCNYNDFHPSQIVKVLAYLATCDDNKKYPVLVSIRGDQEINDIKLSNKISQELKQNVLDIRIISNEDMQKQGISNIPFGFIGPDLSDNLLAQSKAWEKKFIRIADNSAKDLKSFICGNNIKDEHKIFYNWNLINTVQMICDIRKAKPGDRCIHDKTQKLQECRGIEIGHIFQLGTKYSKSLNATFTNEKGVEDHFWMGCYGIGISRLAQAAVEQNHDDLGIIWPTSIAPFTVIIIIANIKNNDQKCLAEDIYQKLIQDRVDVLLDDRDERAGIKFKDADLIGIPWRIVAGREASSGLVELHNRKTKITELLDLNSVFKKLSEEFNTEKL.

The protein belongs to the class-II aminoacyl-tRNA synthetase family. ProS type 1 subfamily. Homodimer.

The protein resides in the cytoplasm. The catalysed reaction is tRNA(Pro) + L-proline + ATP = L-prolyl-tRNA(Pro) + AMP + diphosphate. Its function is as follows. Catalyzes the attachment of proline to tRNA(Pro) in a two-step reaction: proline is first activated by ATP to form Pro-AMP and then transferred to the acceptor end of tRNA(Pro). As ProRS can inadvertently accommodate and process non-cognate amino acids such as alanine and cysteine, to avoid such errors it has two additional distinct editing activities against alanine. One activity is designated as 'pretransfer' editing and involves the tRNA(Pro)-independent hydrolysis of activated Ala-AMP. The other activity is designated 'posttransfer' editing and involves deacylation of mischarged Ala-tRNA(Pro). The misacylated Cys-tRNA(Pro) is not edited by ProRS. This chain is Proline--tRNA ligase, found in Prochlorococcus marinus (strain NATL2A).